Reading from the N-terminus, the 504-residue chain is Anaerobic nitric oxide reductase transcription regulator NorR (504 aa).

The residue at position 57 (D57) is a 4-aspartylphosphate. The Sigma-54 factor interaction domain occupies 187–416 (MIGLSPGMTQ…LEHAIHRAVV (230 aa)). ATP-binding positions include 215–222 (GETGTGKE) and 278–287 (ADNGTLFLDE). The segment at residues 479–498 (WAACARMLETDVANLHRLAK) is a DNA-binding region (H-T-H motif).

It participates in nitrogen metabolism; nitric oxide reduction. Its function is as follows. Required for the expression of anaerobic nitric oxide (NO) reductase, acts as a transcriptional activator for at least the norVW operon. Activation also requires sigma-54. This Escherichia coli O139:H28 (strain E24377A / ETEC) protein is Anaerobic nitric oxide reductase transcription regulator NorR.